The chain runs to 303 residues: Glycine--tRNA ligase alpha subunit (303 aa).

This sequence belongs to the class-II aminoacyl-tRNA synthetase family. Tetramer of two alpha and two beta subunits.

It is found in the cytoplasm. It carries out the reaction tRNA(Gly) + glycine + ATP = glycyl-tRNA(Gly) + AMP + diphosphate. The polypeptide is Glycine--tRNA ligase alpha subunit (glyQ) (Helicobacter pylori (strain ATCC 700392 / 26695) (Campylobacter pylori)).